Here is a 569-residue protein sequence, read N- to C-terminus: Sialic acid-binding Ig-like lectin 5 (569 aa).

A signal peptide spans methionine 1–alanine 16. The Extracellular portion of the chain corresponds to threonine 17–leucine 439. In terms of domain architecture, Ig-like V-type spans aspartate 18–aspartate 116. Disulfide bonds link cysteine 35/cysteine 163, cysteine 40/cysteine 96, cysteine 157/cysteine 206, and cysteine 265/cysteine 308. Asparagine 95 carries an N-linked (GlcNAc...) asparagine glycan. N-acetylneuraminate contacts are provided by arginine 114, lysine 120, and serine 122. 2 Ig-like C2-type domains span residues proline 139–serine 224 and proline 229–serine 324. N-linked (GlcNAc...) asparagine glycosylation is found at asparagine 151, asparagine 200, and asparagine 203. 3 N-linked (GlcNAc...) asparagine glycosylation sites follow: asparagine 369, asparagine 372, and asparagine 387. The chain crosses the membrane as a helical span at residues glycine 440 to phenylalanine 460. The Cytoplasmic segment spans residues threonine 461 to cysteine 569. The segment at histidine 508–alanine 556 is disordered. An ITIM motif motif is present at residues leucine 536–leucine 541. Positions serine 559–isoleucine 564 match the SLAM-like motif motif.

Belongs to the immunoglobulin superfamily. SIGLEC (sialic acid binding Ig-like lectin) family. In terms of tissue distribution, predominantly expressed by immature monocytic/myeloid lineage cells in bone marrow. Also found at lower levels in mature neutrophils and monocytes.

Its subcellular location is the membrane. Putative adhesion molecule that mediates sialic-acid dependent binding to cells. Preferentially binds to alpha-2,3-linked sialic acid. The sialic acid recognition site may be masked by cis interactions with sialic acids on the same cell surface. The chain is Sialic acid-binding Ig-like lectin 5 (Siglec5) from Mus musculus (Mouse).